A 149-amino-acid polypeptide reads, in one-letter code: Nucleoside diphosphate kinase (149 aa).

ATP is bound by residues Lys-9, Phe-57, Arg-85, Thr-91, Arg-102, and Asn-112. The Pros-phosphohistidine intermediate role is filled by His-115.

Belongs to the NDK family. As to quaternary structure, homotetramer. Mg(2+) is required as a cofactor.

The protein resides in the cytoplasm. The catalysed reaction is a 2'-deoxyribonucleoside 5'-diphosphate + ATP = a 2'-deoxyribonucleoside 5'-triphosphate + ADP. It carries out the reaction a ribonucleoside 5'-diphosphate + ATP = a ribonucleoside 5'-triphosphate + ADP. In terms of biological role, major role in the synthesis of nucleoside triphosphates other than ATP. The ATP gamma phosphate is transferred to the NDP beta phosphate via a ping-pong mechanism, using a phosphorylated active-site intermediate. In Heliobacterium modesticaldum (strain ATCC 51547 / Ice1), this protein is Nucleoside diphosphate kinase.